Here is an 881-residue protein sequence, read N- to C-terminus: Serine/threonine-protein kinase greatwall (881 aa).

A disordered region spans residues 1–20 (MSTVEPLSDEGVAAGPRRIE). The region spanning 30-837 (FTIVKPISRG…LKELKHHPLF (808 aa)) is the Protein kinase domain. Residues 36-44 (ISRGAFGKV) and Lys-57 contribute to the ATP site. The active-site Proton acceptor is the Asp-151. Disordered stretches follow at residues 310–345 (SPRLEKDVKQTEDEMCSTGTSNSRPPLPSSREVLNS) and 706–732 (ITPLQKTPRQGDAGTPYRTPKSVRRGA). A compositionally biased stretch (basic and acidic residues) spans 312–321 (RLEKDVKQTE). Thr-743 carries the phosphothreonine; by CDK1 modification. The region spanning 838–881 (HGVDWDNLQNQPMPFIPQPDDETDTSYFEARNNAQHLTVSGFSL) is the AGC-kinase C-terminal domain.

Belongs to the protein kinase superfamily. AGC Ser/Thr protein kinase family. Phosphorylation at Thr-743 by CDK1 during M phase activates its kinase activity. Maximum phosphorylation occurs in prometaphase.

Its subcellular location is the cytoplasm. It localises to the cytoskeleton. It is found in the microtubule organizing center. The protein resides in the centrosome. The protein localises to the nucleus. The catalysed reaction is L-seryl-[protein] + ATP = O-phospho-L-seryl-[protein] + ADP + H(+). The enzyme catalyses L-threonyl-[protein] + ATP = O-phospho-L-threonyl-[protein] + ADP + H(+). Its function is as follows. Serine/threonine kinase that plays a key role in M phase by acting as a regulator of mitosis entry and maintenance. Acts by promoting the inactivation of protein phosphatase 2A (PP2A) during M phase: does not directly inhibit PP2A but acts by mediating phosphorylation and subsequent activation of ARPP19 and ENSA at 'Ser-62' and 'Ser-67', respectively. ARPP19 and ENSA are phosphatase inhibitors that specifically inhibit the PPP2R2D (PR55-delta) subunit of PP2A. Inactivation of PP2A during M phase is essential to keep cyclin-B1-CDK1 activity high. Following DNA damage, it is also involved in checkpoint recovery by being inhibited. The chain is Serine/threonine-protein kinase greatwall (MASTL) from Gallus gallus (Chicken).